The chain runs to 420 residues: Probable protein phosphatase 2C 73 (420 aa).

The PPM-type phosphatase domain occupies Gly33–Leu336. Residues Asp69 and Gly70 each contribute to the Mn(2+) site. The segment covering Leu96–Asn105 has biased composition (polar residues). Positions Leu96–Leu119 are disordered. Basic and acidic residues predominate over residues Thr106–Asp115. Residues Asp281 and Asp327 each contribute to the Mn(2+) site.

Belongs to the PP2C family. Mg(2+) serves as cofactor. Mn(2+) is required as a cofactor.

It catalyses the reaction O-phospho-L-seryl-[protein] + H2O = L-seryl-[protein] + phosphate. The enzyme catalyses O-phospho-L-threonyl-[protein] + H2O = L-threonyl-[protein] + phosphate. In Oryza sativa subsp. japonica (Rice), this protein is Probable protein phosphatase 2C 73.